The primary structure comprises 333 residues: Serine racemase (333 aa).

Mg(2+) is bound at residue glutamate 13. ATP is bound by residues serine 31, serine 32, isoleucine 33, lysine 51, and threonine 52. Lysine 56 (proton acceptor) is an active-site residue. Position 56 is an N6-(pyridoxal phosphate)lysine (lysine 56). Proline 69 contacts Ca(2+). Residue threonine 71 is modified to Phosphothreonine. Threonine 81 is a binding site for Ca(2+). Residue serine 84 is the Proton acceptor of the active site. Residue asparagine 86 coordinates pyridoxal 5'-phosphate. ATP is bound at residue glutamine 89. Cysteine 113 is subject to S-nitrosocysteine. ATP is bound at residue tyrosine 121. Asparagine 154 provides a ligand contact to pyridoxal 5'-phosphate. Mg(2+) is bound at residue aspartate 178. Residues glycine 185, glycine 186, glycine 187, glycine 188, and methionine 189 each contribute to the pyridoxal 5'-phosphate site. Glutamate 210, alanine 214, aspartate 216, and asparagine 247 together coordinate Mg(2+). Ca(2+) is bound by residues glutamate 210, alanine 214, aspartate 216, and asparagine 247. 3 residues coordinate Mn(2+): glutamate 210, alanine 214, and aspartate 216. An ATP-binding site is contributed by lysine 279. Residue serine 313 coordinates pyridoxal 5'-phosphate. Asparagine 316 is an ATP binding site.

This sequence belongs to the serine/threonine dehydratase family. In terms of assembly, homodimer. The cofactor is Mg(2+). It depends on Mn(2+) as a cofactor. Requires Ca(2+) as cofactor. Pyridoxal 5'-phosphate is required as a cofactor. S-nitrosylated, leading to decrease the enzyme activity. In terms of tissue distribution, expressed in the cerebellum and frontal cortex (at protein level).

It catalyses the reaction L-serine = D-serine. The enzyme catalyses D-serine = pyruvate + NH4(+). It carries out the reaction L-serine = pyruvate + NH4(+). Allosterically activated by magnesium, and possibly also other divalent metal cations. Allosterically activated by ATP, ADP or GTP. Competitively inhibited by malonate. Functionally, catalyzes the synthesis of D-serine from L-serine. D-serine is a key coagonist with glutamate at NMDA receptors. Has dehydratase activity towards both L-serine and D-serine. In Rattus norvegicus (Rat), this protein is Serine racemase (Srr).